A 630-amino-acid polypeptide reads, in one-letter code: Peptidyl-prolyl cis-trans isomerase cyp15 (630 aa).

Residues 1–46 (MPEDSNTNDNNKRPLEDNNAVDGESDDDIGPMLPPPPGEDAPRKKK) form a disordered region. 5 WD repeats span residues 70–108 (MHRD…IEFV), 113–152 (SHLS…MINM), 157–198 (YKPK…KPLH), 203–242 (MHSK…ALPD), and 258–301 (RKKK…REYD). One can recognise a PPIase cyclophilin-type domain in the interval 475–629 (LGTSAIIRTT…DDIKIINIDI (155 aa)).

Belongs to the cyclophilin-type PPIase family.

The enzyme catalyses [protein]-peptidylproline (omega=180) = [protein]-peptidylproline (omega=0). In terms of biological role, PPIases accelerate the folding of proteins. It catalyzes the cis-trans isomerization of proline imidic peptide bonds in oligopeptides. This Rhizopus delemar (strain RA 99-880 / ATCC MYA-4621 / FGSC 9543 / NRRL 43880) (Mucormycosis agent) protein is Peptidyl-prolyl cis-trans isomerase cyp15 (cyp15).